The primary structure comprises 229 residues: Potassium/proton antiporter CemA (229 aa).

The next 3 helical transmembrane spans lie at 7-27 (FTPL…SLLF), 107-127 (ILHF…SIFG), and 189-209 (IISG…KYWI).

The protein belongs to the CemA family.

It is found in the plastid. The protein resides in the chloroplast inner membrane. The catalysed reaction is K(+)(in) + H(+)(out) = K(+)(out) + H(+)(in). Its function is as follows. Contributes to K(+)/H(+) antiport activity by supporting proton efflux to control proton extrusion and homeostasis in chloroplasts in a light-dependent manner to modulate photosynthesis. Prevents excessive induction of non-photochemical quenching (NPQ) under continuous-light conditions. Indirectly promotes efficient inorganic carbon uptake into chloroplasts. In Guizotia abyssinica (Niger), this protein is Potassium/proton antiporter CemA.